The sequence spans 354 residues: Glutaminyl-peptide cyclotransferase (354 aa).

A mitochondrion-targeting transit peptide spans M1–Y8. Cysteines 136 and 158 form a disulfide. D153 lines the Zn(2+) pocket. The active-site Proton acceptor is E190. E191 lines the Zn(2+) pocket. D228 (proton acceptor) is an active-site residue. Residue H318 coordinates Zn(2+).

Belongs to the glutaminyl-peptide cyclotransferase family.

The protein resides in the secreted. The protein localises to the mitochondrion. It catalyses the reaction N-terminal L-glutaminyl-[peptide] = N-terminal 5-oxo-L-prolyl-[peptide] + NH4(+). Its activity is regulated as follows. Inhibited by imidazoles (imidazole, benzimidazole, 1-benzylimidazole, 1-methylimidazole, P150/03 and N-omega-acetylhistamine) and cysteamines (cysteamine and N-dimethylcysteamine). Inhibited by PDB50 1(3,4-dimethoxyphenyl)-3-(3-imidazol-1-ylpropyl)thiourea. Acts as a glutaminyl-peptide cyclotransferase. Responsible for the biosynthesis of pyroglutamyl peptides. Might be more efficient in the conversion of tri and tetrapeptides in vitro. Might have a relative preference for substrates containing hydrophobic amino acids in vitro. The polypeptide is Glutaminyl-peptide cyclotransferase (Drosophila melanogaster (Fruit fly)).